Consider the following 473-residue polypeptide: UDP-glycosyltransferase 71B1 (473 aa).

Catalysis depends on His-15, which acts as the Proton acceptor. His-15 contacts an anthocyanidin. The active-site Charge relay is the Asp-110. Residues Thr-132, Ala-342, Gln-344, His-359, Trp-362, Asn-363, Ser-364, and Glu-367 each contribute to the UDP-alpha-D-glucose site. Ala-382 is an an anthocyanidin binding site. The UDP-alpha-D-glucose site is built by Glu-383 and Gln-384.

This sequence belongs to the UDP-glycosyltransferase family.

It catalyses the reaction a flavonol + UDP-alpha-D-glucose = a flavonol 3-O-beta-D-glucoside + UDP + H(+). Functionally, possesses quercetin 3-O-glucosyltransferase activity in vitro. Also active in vitro on benzoates and benzoate derivatives. In Arabidopsis thaliana (Mouse-ear cress), this protein is UDP-glycosyltransferase 71B1 (UGT71B1).